The chain runs to 258 residues: 4-oxalmesaconate hydratase (258 aa).

Zn(2+)-binding residues include His-28, Asp-31, and His-141.

This sequence belongs to the MshB deacetylase family. The cofactor is Zn(2+).

It catalyses the reaction 2-hydroxy-4-oxobutane-1,2,4-tricarboxylate = 4-carboxy-2-hydroxy-cis,cis-muconate + H2O. Catalyzes the conversion of oxalomesaconic acid enol (OMAenol) to 4-carboxy-4-hydroxy-2-oxoadipic acid (CHA). Mediates the third step of gallate degradation pathway. This Pseudomonas putida (strain ATCC 47054 / DSM 6125 / CFBP 8728 / NCIMB 11950 / KT2440) protein is 4-oxalmesaconate hydratase (galB).